We begin with the raw amino-acid sequence, 90 residues long: Probable Fe(2+)-trafficking protein (90 aa).

Belongs to the Fe(2+)-trafficking protein family. In terms of assembly, monomer.

Its function is as follows. Could be a mediator in iron transactions between iron acquisition and iron-requiring processes, such as synthesis and/or repair of Fe-S clusters in biosynthetic enzymes. The sequence is that of Probable Fe(2+)-trafficking protein from Yersinia pestis bv. Antiqua (strain Antiqua).